A 118-amino-acid polypeptide reads, in one-letter code: UPF0344 protein BLi01172/BL01343 (118 aa).

The next 4 membrane-spanning stretches (helical) occupy residues 6–26 (ITSW…YSSG), 33–53 (ITHM…AQLF), 62–82 (EYIA…MLLI), and 89–109 (AATG…VLGL).

This sequence belongs to the UPF0344 family.

Its subcellular location is the cell membrane. This chain is UPF0344 protein BLi01172/BL01343, found in Bacillus licheniformis (strain ATCC 14580 / DSM 13 / JCM 2505 / CCUG 7422 / NBRC 12200 / NCIMB 9375 / NCTC 10341 / NRRL NRS-1264 / Gibson 46).